Reading from the N-terminus, the 705-residue chain is Calpastatin (705 aa).

Disordered stretches follow at residues 1–211 (MNPT…PNDA) and 226–493 (LTTC…PLPP). Composition is skewed to basic and acidic residues over residues 7–17 (KAVKTEPEKKP) and 24–62 (VVHE…EKAV). A Glycyl lysine isopeptide (Lys-Gly) (interchain with G-Cter in SUMO2) cross-link involves residue Lys-10. Lys-28 bears the N6-acetyllysine mark. Composition is skewed to low complexity over residues 63 to 72 (SKSSEQPPSE) and 94 to 103 (PAAAAAASAE). Ser-65 is subject to Phosphoserine. Position 115 is a phosphothreonine (Thr-115). A compositionally biased stretch (acidic residues) spans 135–151 (TALDDLIDTLGEPEEMK). Residues 149 to 202 (EMKEDNTTYTGPEVSDPMSSTYIEELGKRESTPPPKYKELLNKEEGIAGPPPDS) form an Inhibitory domain 1 repeat. The segment covering 173–194 (ELGKRESTPPPKYKELLNKEEG) has biased composition (basic and acidic residues). Phosphoserine is present on residues Ser-202 and Ser-230. Basic and acidic residues predominate over residues 234–248 (DGKETEKEKSTEEAL). The segment covering 275 to 286 (TEQALQALSASL) has biased composition (polar residues). Composition is skewed to basic and acidic residues over residues 289–317 (RKPE…KKCG) and 327–352 (YRLK…KPLS). One copy of the Inhibitory domain 2 repeat lies at 292-344 (EPELDPSSIREVDEAKAKEEKVKKCGEDEETVPSEYRLKPATDKDGKPLLPEA). Phosphoserine occurs at positions 352, 354, and 361. The segment covering 355–364 (ELIDELSEDF) has biased composition (acidic residues). Basic and acidic residues predominate over residues 365 to 381 (DQSKPTEKQSKPTEKTE). Position 428 is a phosphoserine (Ser-428). A compositionally biased stretch (basic and acidic residues) spans 430–489 (PKKEADPEDGKPVEDKVKEKAKEEDRENFGEKEETIPPDYRLEEAKDKDGKPLLPKEVKE). Residues 434-487 (ADPEDGKPVEDKVKEKAKEEDRENFGEKEETIPPDYRLEEAKDKDGKPLLPKEV) form an Inhibitory domain 3 repeat. Phosphoserine is present on residues Ser-504 and Ser-515. The segment at 527–705 (VSEVVSQTPA…KPKADGKSTS (179 aa)) is disordered. Over residues 533–542 (QTPAPTTQAA) the composition is skewed to low complexity. Position 563 is a phosphoserine (Ser-563). An Inhibitory domain 4 repeat occupies 571–624 (PDPDENKPVEDKVKEKAKAEHRDKLGERDDTIPPKYQHLLDDNKEGTPGKPKDQ). Residues 571 to 625 (PDPDENKPVEDKVKEKAKAEHRDKLGERDDTIPPKYQHLLDDNKEGTPGKPKDQR) show a composition bias toward basic and acidic residues. The segment covering 651–662 (DSCPSTTETSTD) has biased composition (low complexity). The span at 683–705 (KAKDSTKAKEETSKPKADGKSTS) shows a compositional bias: basic and acidic residues.

Belongs to the protease inhibitor I27 (calpastatin) family.

In terms of biological role, specific inhibition of calpain (calcium-dependent cysteine protease). Plays a key role in postmortem tenderization of meat and have been proposed to be involved in muscle protein degradation in living tissue. The polypeptide is Calpastatin (CAST) (Bos taurus (Bovine)).